A 237-amino-acid polypeptide reads, in one-letter code: Intracellular ribonuclease LX (237 aa).

Residues 1–24 (MMKSQKKLLIKIIVVQCLLVLCVT) constitute a propeptide that is removed on maturation. Residue Q36 participates in RNA binding. Residues C42 and C48 are joined by a disulfide bond. RNA contacts are provided by residues H63, F113, 116–117 (HE), and 120–121 (KH). The Proton donor role is filled by H63. 3 disulfide bridges follow: C78-C124, C183-C219, and C199-C210. Residue E117 is part of the active site. Catalysis depends on H121, which acts as the Proton acceptor.

It belongs to the RNase T2 family.

It is found in the cytoplasm. It carries out the reaction a ribonucleotidyl-ribonucleotide-RNA + H2O = a 3'-end 3'-phospho-ribonucleotide-RNA + a 5'-end dephospho-ribonucleoside-RNA + H(+). In Solanum lycopersicum (Tomato), this protein is Intracellular ribonuclease LX (RNALX).